The following is a 145-amino-acid chain: Antiholin-like protein LrgA (145 aa).

The next 4 helical transmembrane spans lie at phenylalanine 13 to isoleucine 30, glycine 40 to valine 62, leucine 69 to isoleucine 91, and proline 95 to threonine 117.

It belongs to the CidA/LrgA family. LrgA subfamily.

Its subcellular location is the cell membrane. Inhibits the expression or activity of extracellular murein hydrolases by interacting, possibly with LrgB, with the holin-like proteins CidA and/or CidB. The LrgAB and CidAB proteins may affect the proton motive force of the membrane. May be involved in programmed cell death (PCD), possibly triggering PCD in response to antibiotics and environmental stresses. This is Antiholin-like protein LrgA from Staphylococcus aureus (strain MW2).